Here is a 577-residue protein sequence, read N- to C-terminus: Arginine--tRNA ligase (577 aa).

The short motif at 132-142 (ANPTGPLHVGH) is the 'HIGH' region element.

Belongs to the class-I aminoacyl-tRNA synthetase family. As to quaternary structure, monomer.

Its subcellular location is the cytoplasm. It carries out the reaction tRNA(Arg) + L-arginine + ATP = L-arginyl-tRNA(Arg) + AMP + diphosphate. The sequence is that of Arginine--tRNA ligase from Herminiimonas arsenicoxydans.